We begin with the raw amino-acid sequence, 197 residues long: uncharacterized protein (197 aa).

A run of 4 helical transmembrane segments spans residues 30–50 (WVAM…VEMA), 61–81 (LVAG…PPLV), 101–121 (LWSV…LGLA), and 130–150 (IGEF…VAML).

The protein resides in the cell membrane. This is an uncharacterized protein from Mycobacterium tuberculosis (strain CDC 1551 / Oshkosh).